The following is a 199-amino-acid chain: Peptidyl-tRNA hydrolase (199 aa).

Y18 is a tRNA binding site. H23 serves as the catalytic Proton acceptor. Y72, N74, and N120 together coordinate tRNA.

It belongs to the PTH family. Monomer.

It is found in the cytoplasm. It carries out the reaction an N-acyl-L-alpha-aminoacyl-tRNA + H2O = an N-acyl-L-amino acid + a tRNA + H(+). Its function is as follows. Hydrolyzes ribosome-free peptidyl-tRNAs (with 1 or more amino acids incorporated), which drop off the ribosome during protein synthesis, or as a result of ribosome stalling. Catalyzes the release of premature peptidyl moieties from peptidyl-tRNA molecules trapped in stalled 50S ribosomal subunits, and thus maintains levels of free tRNAs and 50S ribosomes. The sequence is that of Peptidyl-tRNA hydrolase from Bifidobacterium animalis subsp. lactis (strain AD011).